The primary structure comprises 2725 residues: Teneurin-1 (2725 aa).

Residues 1–48 are disordered; sequence MEQTDCKPYQPLPKVKHEMDLAYTSSSDESEDGRKPRQSYNSRETLHE. A Teneurin N-terminal domain is found at 1 to 318; the sequence is MEQTDCKPYQ…KPYRCCNWKC (318 aa). The Cytoplasmic portion of the chain corresponds to 1–324; sequence MEQTDCKPYQ…NWKCTALSAT (324 aa). The short motif at 62–65 is the Nuclear localization signal (NLS) element; it reads RKRK. A Phosphoserine modification is found at Ser105. Thr109 is subject to Phosphothreonine. Residue Ser116 is modified to Phosphoserine. The segment covering 174–189 has biased composition (polar residues); it reads AGSTQDVQSSPHNQFT. Positions 174–241 are disordered; sequence AGSTQDVQSS…PAPPTSTQDS (68 aa). Residues 192–201 are compositionally biased toward pro residues; it reads PLPPPPPPPH. The short motif at 290 to 297 is the Required for interaction with SORBS1 (Ten-1 ICD form) element; that stretch reads PPPRPLPR. The helical transmembrane segment at 325-345 threads the bilayer; it reads AITVTLALLLAYVIAVHLFGL. The Extracellular segment spans residues 346–2725; sequence TWQLQPVEGE…FMRQSEIGRR (2380 aa). Asn433 carries N-linked (GlcNAc...) asparagine glycosylation. EGF-like domains follow at residues 528–559, 560–591, 592–624, 625–657, 658–691, 692–721, 722–753, and 761–796; these read IMDD…PDCA, RDSC…ECDV, PEEQ…EICE, EEDC…NCET, PLPV…SDCS, TELC…GPTC, EERS…DHCT, and VRDG…TGCN. Cystine bridges form between Cys532/Cys542, Cys536/Cys547, Cys549/Cys558, Cys567/Cys578, Cys580/Cys589, Cys596/Cys607, Cys601/Cys612, Cys614/Cys623, Cys628/Cys639, Cys633/Cys644, Cys646/Cys655, Cys666/Cys679, Cys681/Cys690, Cys695/Cys705, Cys699/Cys710, Cys712/Cys721, Cys726/Cys736, Cys730/Cys741, Cys743/Cys752, Cys765/Cys775, Cys769/Cys784, and Cys786/Cys795. N-linked (GlcNAc...) asparagine glycosylation is found at Asn905 and Asn1084. NHL repeat units follow at residues 1194–1219, 1292–1336, 1351–1402, 1414–1458, and 1481–1524; these read LFAP…VRRI, SHCG…NAVI, LSCD…IAGR, FLVS…VTTN, and CFSG…ISRN. One copy of the YD 1 repeat lies at 1534 to 1553; the sequence is YEIASPADQELYQFTVNGTH. N-linked (GlcNAc...) asparagine glycans are attached at residues Asn1550 and Asn1567. YD repeat units follow at residues 1570–1590, 1608–1632, 1633–1654, and 1655–1675; these read YNSE…VHIR, YWLT…ALMT, YPGN…TVYE, and YDPE…SSFH. N-linked (GlcNAc...) asparagine glycosylation is found at Asn1663, Asn1699, Asn1757, Asn1781, and Asn1842. YD repeat units follow at residues 1845–1864, 1865–1885, 1886–1904, 1905–1925, 1933–1949, 1950–1969, 1970–1989, 1992–2012, 2015–2035, 2085–2105, and 2113–2133; these read YSPS…EKME, YDQS…WSYT, YLEK…YIFE, YDQP…HSLQ, YRNI…FIQD, YSRD…RRVL, YKYT…TQVT, YEES…FICT, YRQT…EGLV, YDLN…FSAN, and YEIL…VGRM. N-linked (GlcNAc...) asparagine glycosylation is present at Asn2145. YD repeat units follow at residues 2153–2173, 2174–2194, 2196–2216, 2228–2248, and 2250–2270; these read YDAD…WRYS, YDLN…LTPL, YDLR…DEDG, YNSN…TVQY, and YDGL…LQFF. Residue Asn2285 is glycosylated (N-linked (GlcNAc...) asparagine). YD repeat units lie at residues 2296-2313 and 2314-2337; these read YDLQ…GEEY and YVAC…IKEI. A Phosphoserine modification is found at Ser2580. Asn2602 carries N-linked (GlcNAc...) asparagine glycosylation.

Belongs to the tenascin family. Teneurin subfamily. As to quaternary structure, homodimer; disulfide-linked. Heterodimer with either TENM2 or TENM3. May also form heterodimer with TENM4. Ten-1 ICD interacts with SORBS1 (via third SH3 domain). Interacts with MBD1. Ten-1 ICD interacts with HINT1. Post-translationally, derives from the plasma membrane form by proteolytic processing. Further proteolytic cleavage may be generated. As to expression, expressed in fetal brain.

It localises to the cell membrane. Its subcellular location is the nucleus. The protein resides in the nucleus speckle. It is found in the nucleus matrix. The protein localises to the cytoplasm. It localises to the cytoskeleton. Its function is as follows. Involved in neural development, regulating the establishment of proper connectivity within the nervous system. May function as a cellular signal transducer. Functionally, plays a role in the regulation of neuroplasticity in the limbic system. Mediates a rapid reorganization of actin- and tubulin-based cytoskeleton elements with an increase in dendritic arborization and spine density formation of neurons in the hippocampus and amygdala. Induces BDNF transcription inhibition in neurons. Activates the mitogen-activated protein (MAP) kinase 2 (MEK2) and extracellular signal-regulated kinase (ERK) cascade. Also acts as a bioactive neuroprotective peptide on limbic neurons of the brain and regulates stress-induced behavior: attenuates alkalosis-associated necrotic cell death and the effects of corticotropin-releasing factor (CRF) on c-fos/FOS induction and on the reinstatement of cocaine seeking. In terms of biological role, induces gene transcription activation. The protein is Teneurin-1 (TENM1) of Homo sapiens (Human).